The sequence spans 862 residues: Protein translocase subunit SecA (862 aa).

ATP contacts are provided by residues Gln-88, 106 to 110 (GEGKT), and Asp-506. The Zn(2+) site is built by Cys-839, Cys-841, Cys-850, and His-851.

Belongs to the SecA family. In terms of assembly, monomer and homodimer. Part of the essential Sec protein translocation apparatus which comprises SecA, SecYEG and auxiliary proteins SecDF-YajC and YidC. It depends on Zn(2+) as a cofactor.

The protein resides in the cell inner membrane. The protein localises to the cytoplasm. The catalysed reaction is ATP + H2O + cellular proteinSide 1 = ADP + phosphate + cellular proteinSide 2.. Functionally, part of the Sec protein translocase complex. Interacts with the SecYEG preprotein conducting channel. Has a central role in coupling the hydrolysis of ATP to the transfer of proteins into and across the cell membrane, serving as an ATP-driven molecular motor driving the stepwise translocation of polypeptide chains across the membrane. The chain is Protein translocase subunit SecA from Campylobacter jejuni (strain RM1221).